A 1167-amino-acid polypeptide reads, in one-letter code: Nucleolar protein 8 (1167 aa).

The RRM domain occupies 8-89 (KRLYVGGLSQ…GTLQIQLAKE (82 aa)). Positions 223–304 (VQKDESSTGS…NSISDDDTDS (82 aa)) are disordered. Residue K225 forms a Glycyl lysine isopeptide (Lys-Gly) (interchain with G-Cter in SUMO2) linkage. The segment covering 248–275 (LTQQQAAQKRTCDSITPSKSSPVPVSDT) has biased composition (polar residues). Phosphoserine is present on residues S268 and S298. Phosphothreonine is present on T302. Residue S304 is modified to Phosphoserine. K314 participates in a covalent cross-link: Glycyl lysine isopeptide (Lys-Gly) (interchain with G-Cter in SUMO2). 2 positions are modified to phosphoserine: S331 and S365. Residue Y376 is modified to Phosphotyrosine. Phosphoserine is present on S378. T381 carries the phosphothreonine modification. Position 432 is a phosphoserine (S432). Disordered regions lie at residues 435 to 470 (ESAL…DSEG), 499 to 533 (LKVP…TGLR), 590 to 908 (KDSV…EEEL), 932 to 982 (NRGS…AEKL), and 1006 to 1026 (YTSE…EKPE). Over residues 457-470 (EDADSASELADSEG) the composition is skewed to acidic residues. Residues 501–510 (VPNEDTKSDG) are compositionally biased toward basic and acidic residues. The span at 640–652 (NYIQPQKRQTTFE) shows a compositional bias: polar residues. The span at 653 to 668 (SQDRKAVSPSSSEKRS) shows a compositional bias: basic and acidic residues. S723 is modified (phosphoserine). The span at 727–736 (SSKDTREIKT) shows a compositional bias: basic and acidic residues. Over residues 738-748 (FSLSISNSSDV) the composition is skewed to polar residues. Over residues 749–776 (SAKDKHAEDNEKRLAALEARQKAKEVQK) the composition is skewed to basic and acidic residues. The stretch at 753 to 779 (KHAEDNEKRLAALEARQKAKEVQKKLV) forms a coiled coil. The residue at position 795 (T795) is a Phosphothreonine. The residue at position 801 (S801) is a Phosphoserine. Positions 817 to 827 (HPGEEWVKESM) are enriched in basic and acidic residues. S837, S838, S843, and S845 each carry phosphoserine. Residues 837–847 (SSDDDESDSED) show a composition bias toward acidic residues. Residues 874–887 (GTDDRFRMDSRFLE) are compositionally biased toward basic and acidic residues. Residues 886–924 (LETDSEEEQEEVNEKKTAEEEELAEEKKKALNVVQSVLQ) are a coiled coil. A Phosphothreonine modification is found at T888. The residue at position 890 (S890) is a Phosphoserine. Composition is skewed to basic and acidic residues over residues 940–968 (KFKD…PKES) and 1007–1026 (TSEK…EKPE). S1036 carries the post-translational modification Phosphoserine. A Glycyl lysine isopeptide (Lys-Gly) (interchain with G-Cter in SUMO2) cross-link involves residue K1057. 2 disordered regions span residues 1071-1105 (IVWQ…EASL) and 1145-1167 (RTTN…MKPK). 4 positions are modified to phosphoserine: S1082, S1083, S1084, and S1099. The span at 1153-1167 (CRKKHKDAKRKMKPK) shows a compositional bias: basic residues.

In terms of assembly, interacts with the GTP form of RRAGA, RRAGC and RRAGD. Interacts with NIP7. Interacts with DDX18; the interaction is RNA-dependent. Interacts with DDX47; the interaction is RNA-dependent. In terms of processing, phosphorylated. Expressed in various diffuse-type gastric cancers. Detected at lower levels in skeletal muscle.

The protein resides in the nucleus. Its subcellular location is the nucleolus. Plays an essential role in the survival of diffuse-type gastric cancer cells. Acts as a nucleolar anchoring protein for DDX47. May be involved in regulation of gene expression at the post-transcriptional level or in ribosome biogenesis in cancer cells. In Homo sapiens (Human), this protein is Nucleolar protein 8.